We begin with the raw amino-acid sequence, 464 residues long: MSNETPKKFIPNEQNPMPRWEKKFNKILTPFERFVNRTTTGGLILMMAALIALALANSPLAHHYLHALHVPLGLNLGDWRIEKSLHHWVNDGLMALFFFVVGLELKREMLVGELAEIRKAVLPIVAAIGGMVIPAICYMSLNLNDETFRGWGIPMATDIAFALGVIALLASRVPKALITFLVALAIVDDLGAVVVIAVFYTQDLAWSFLIAGALLTCLLIFFNMIGIRKPSVYFFVGLILWFVFLKSGVHATLAGVITAFTIPAKPKFNTLTFSNRVQDILYKFRKGCEEDESILRNEHLSGLVQTLENGVVGVQTPLQRLEHSFHKPVAFFILPVFAIFNAGVTIDFGNAFQLFNHPITLGVVFGLLFGKFVGITGASWLAIRFGLCSLPNDTSMKHIIGASMLGSIGFTMSIFIAELAFVSQPEMIIQAKLGILLSSLVAGVAGYLWLHKLGGEKSRIGSSL.

Transmembrane regions (helical) follow at residues 41–61 (GGLI…SPLA), 85–105 (LHHW…GLEL), 121–141 (VLPI…YMSL), 150–170 (GWGI…ALLA), 180–200 (FLVA…AVFY), 207–227 (SFLI…MIGI), 234–254 (FFVG…ATLA), 329–349 (VAFF…IDFG), 363–383 (VVFG…WLAI), 399–419 (IIGA…IAEL), and 428–448 (IIQA…AGYL).

The protein belongs to the NhaA Na(+)/H(+) (TC 2.A.33) antiporter family.

It localises to the cell inner membrane. The enzyme catalyses Na(+)(in) + 2 H(+)(out) = Na(+)(out) + 2 H(+)(in). In terms of biological role, na(+)/H(+) antiporter that extrudes sodium in exchange for external protons. This is Na(+)/H(+) antiporter NhaA 1 from Saccharophagus degradans (strain 2-40 / ATCC 43961 / DSM 17024).